The chain runs to 153 residues: Bifunctional protein GAL10 (153 aa).

A galactowaldenase region spans residues 1–153 (MSDDIFLVTG…IPIPEHCPME (153 aa)).

It in the N-terminal section; belongs to the NAD(P)-dependent epimerase/dehydratase family. The protein in the C-terminal section; belongs to the aldose epimerase family. NAD(+) serves as cofactor.

The enzyme catalyses UDP-alpha-D-glucose = UDP-alpha-D-galactose. It catalyses the reaction alpha-D-glucose = beta-D-glucose. Its pathway is carbohydrate metabolism; galactose metabolism. It participates in carbohydrate metabolism; hexose metabolism. In terms of biological role, mutarotase converts alpha-aldose to the beta-anomer. It is active on D-glucose, L-arabinose, D-xylose, D-galactose, maltose and lactose. The protein is Bifunctional protein GAL10 (GAL10) of Candida maltosa (Yeast).